A 729-amino-acid polypeptide reads, in one-letter code: Fatty acid oxidation complex subunit alpha (729 aa).

Positions 1-189 (MLYQGETLQL…KVGLVDAVVA (189 aa)) are enoyl-CoA hydratase/isomerase. Asp-296 provides a ligand contact to substrate. Residues 311–729 (EAPKQAAVLG…LSDVSTGQPA (419 aa)) are 3-hydroxyacyl-CoA dehydrogenase. NAD(+) contacts are provided by residues Met-324, Asp-343, 400 to 402 (VVE), Lys-407, and Ser-429. His-450 acts as the For 3-hydroxyacyl-CoA dehydrogenase activity in catalysis. Residue Asn-453 participates in NAD(+) binding. Substrate-binding residues include Asn-500 and Tyr-660.

The protein in the N-terminal section; belongs to the enoyl-CoA hydratase/isomerase family. It in the C-terminal section; belongs to the 3-hydroxyacyl-CoA dehydrogenase family. In terms of assembly, heterotetramer of two alpha chains (FadB) and two beta chains (FadA).

The catalysed reaction is a (3S)-3-hydroxyacyl-CoA + NAD(+) = a 3-oxoacyl-CoA + NADH + H(+). It carries out the reaction a (3S)-3-hydroxyacyl-CoA = a (2E)-enoyl-CoA + H2O. The enzyme catalyses a 4-saturated-(3S)-3-hydroxyacyl-CoA = a (3E)-enoyl-CoA + H2O. It catalyses the reaction (3S)-3-hydroxybutanoyl-CoA = (3R)-3-hydroxybutanoyl-CoA. The catalysed reaction is a (3Z)-enoyl-CoA = a 4-saturated (2E)-enoyl-CoA. It carries out the reaction a (3E)-enoyl-CoA = a 4-saturated (2E)-enoyl-CoA. It functions in the pathway lipid metabolism; fatty acid beta-oxidation. Functionally, involved in the aerobic and anaerobic degradation of long-chain fatty acids via beta-oxidation cycle. Catalyzes the formation of 3-oxoacyl-CoA from enoyl-CoA via L-3-hydroxyacyl-CoA. It can also use D-3-hydroxyacyl-CoA and cis-3-enoyl-CoA as substrate. This chain is Fatty acid oxidation complex subunit alpha, found in Serratia proteamaculans (strain 568).